The chain runs to 473 residues: Sulfhydrylase-like protein lolC2 (473 aa).

Lys226 carries the post-translational modification N6-(pyridoxal phosphate)lysine.

The protein belongs to the trans-sulfuration enzymes family. It depends on pyridoxal 5'-phosphate as a cofactor.

The protein operates within alkaloid biosynthesis. Sulfhydrylase-like protein; part of the gene cluster that mediates the biosynthesis of loline alkaloids, potent insecticidal agents composed of a pyrrolizidine ring system and an uncommon ether bridge linking carbons 2 and 7. Lolines are structurally differentiated by the various modifications of the L-amino group and include norloline, loline, N-methylloline, N-acetylloline, N-acetylnorloline, and N-formylloline. The first committed step is the condensation of O-acetyl-L-homoserine (derived from L-aspartic acid) and L-proline, probably catalyzed by the gamma-type pyridoxal 5'-phosphate(PLP)-dependent enzyme lolC, to give the diamino diacid, NACPP. Ensuing cyclization, decarboxylation, and acetylation steps yield 1-exo-acetamidopyrrolizidine (AcAP). LolO is required for installation of the ether bridge upon the pathway intermediate, 1-exo-acetamidopyrrolizidine (AcAP). In sequential 2-oxoglutarate- and O(2)-consuming steps, lolO removes hydrogens from C2 and C7 of AcAP to form both carbon-oxygen bonds in N-acetylnorloline (NANL), the precursor to all other lolines. The enzymes lolD, lolE, lolF and lolT have also been proposed to be involved in the ether-bridge installation. Further processing of the exocyclic moiety of NANL by fungal N-acetamidase (LolN), methyltransferase (LolM), and cytochrome P450 (LolP) enzymes, with occasional involvement of a plant acetyltransferase, generates the other known lolines. LolN transforms NANL to norlonine which is monomethylated and dimethylated to respectively lonine and N-methyllonine (NML) by lolM. LolP catalyzes hydroxylation of the methyl group in N-methylloline (NML) and further oxygenation to N-formylloline (NFL). A plant acetyltransferase is responsible for the acetylation of loline to form N-acetylloline (NAL). LolA might interact with aspartate kinase to prevent feedback inhibition of its activity by these end products and thereby promote production of L-homoserine from L-aspartate. The sequence is that of Sulfhydrylase-like protein lolC2 from Epichloe uncinata (Endophyte fungus).